The chain runs to 228 residues: Cytidylate kinase (228 aa).

17–25 (GPTASGKGT) is a binding site for ATP.

It belongs to the cytidylate kinase family. Type 1 subfamily.

The protein resides in the cytoplasm. It carries out the reaction CMP + ATP = CDP + ADP. The enzyme catalyses dCMP + ATP = dCDP + ADP. The sequence is that of Cytidylate kinase from Burkholderia ambifaria (strain MC40-6).